The sequence spans 158 residues: Sporulation-delaying protein SdpA (158 aa).

Its subcellular location is the cytoplasm. Its function is as follows. Required for the maturation of SdpC to SDP. Not required for SdpC signal peptide cleavage, secretion from the cell or disulfide bond formation. This chain is Sporulation-delaying protein SdpA, found in Bacillus subtilis (strain 168).